The sequence spans 376 residues: Succinate--CoA ligase [ADP-forming] subunit beta (376 aa).

Residues 9–234 (KAIAKKYGIP…ERELSELEKE (226 aa)) enclose the ATP-grasp domain. Residues lysine 45, 52 to 54 (GRG), glutamate 91, glutamate 94, and glutamate 99 each bind ATP. Positions 191 and 204 each coordinate Mg(2+). Substrate contacts are provided by residues asparagine 254 and 311–313 (GIT).

Belongs to the succinate/malate CoA ligase beta subunit family. In terms of assembly, heterotetramer of two alpha and two beta subunits. It depends on Mg(2+) as a cofactor.

It catalyses the reaction succinate + ATP + CoA = succinyl-CoA + ADP + phosphate. The enzyme catalyses GTP + succinate + CoA = succinyl-CoA + GDP + phosphate. The protein operates within carbohydrate metabolism; tricarboxylic acid cycle; succinate from succinyl-CoA (ligase route): step 1/1. Its function is as follows. Succinyl-CoA synthetase functions in the citric acid cycle (TCA), coupling the hydrolysis of succinyl-CoA to the synthesis of either ATP or GTP and thus represents the only step of substrate-level phosphorylation in the TCA. The beta subunit provides nucleotide specificity of the enzyme and binds the substrate succinate, while the binding sites for coenzyme A and phosphate are found in the alpha subunit. This chain is Succinate--CoA ligase [ADP-forming] subunit beta, found in Ignicoccus hospitalis (strain KIN4/I / DSM 18386 / JCM 14125).